The following is a 113-amino-acid chain: Probable mesentericin-Y105 immunity protein (113 aa).

It belongs to the immunity protein EntA family.

Imparts immunity to mesentericin-Y105 to naturally sensitive host strains. This is Probable mesentericin-Y105 immunity protein (mesI) from Leuconostoc mesenteroides.